The following is a 790-amino-acid chain: Phenylalanine--tRNA ligase beta subunit (790 aa).

A tRNA-binding domain is found at P39–C154. The region spanning F404 to P483 is the B5 domain. Residues D457, D463, E466, and E467 each contribute to the Mg(2+) site. One can recognise an FDX-ACB domain in the interval P694–S790.

This sequence belongs to the phenylalanyl-tRNA synthetase beta subunit family. Type 1 subfamily. As to quaternary structure, tetramer of two alpha and two beta subunits. Mg(2+) serves as cofactor.

The protein localises to the cytoplasm. The catalysed reaction is tRNA(Phe) + L-phenylalanine + ATP = L-phenylalanyl-tRNA(Phe) + AMP + diphosphate + H(+). The chain is Phenylalanine--tRNA ligase beta subunit from Chlamydia trachomatis serovar A (strain ATCC VR-571B / DSM 19440 / HAR-13).